Here is a 207-residue protein sequence, read N- to C-terminus: High frequency lysogenization protein HflD homolog (207 aa).

It belongs to the HflD family.

It localises to the cytoplasm. It is found in the cell inner membrane. This is High frequency lysogenization protein HflD homolog from Cellvibrio japonicus (strain Ueda107) (Pseudomonas fluorescens subsp. cellulosa).